We begin with the raw amino-acid sequence, 261 residues long: Carnitinyl-CoA dehydratase (261 aa).

The Nucleophile role is filled by Glu111. Glu131 functions as the Proton acceptor in the catalytic mechanism.

The protein belongs to the enoyl-CoA hydratase/isomerase family.

It carries out the reaction (R)-carnitinyl-CoA = crotonobetainyl-CoA + H2O. Its pathway is amine and polyamine metabolism; carnitine metabolism. Its function is as follows. Catalyzes the reversible dehydration of L-carnitinyl-CoA to crotonobetainyl-CoA. The chain is Carnitinyl-CoA dehydratase from Salmonella enteritidis PT4 (strain P125109).